Here is a 165-residue protein sequence, read N- to C-terminus: 2-halobenzoate 1,2-dioxygenase small subunit (165 aa).

This sequence belongs to the bacterial ring-hydroxylating dioxygenase beta subunit family. As to quaternary structure, heterohexamer of 3 large (CbdA) subunits and 3 small (CbdB) subunits. The heterohexamer is part of 2-halobenzoate dioxygenase two component enzyme system. The other component is a NADH:acceptor reductase (CdbC).

It catalyses the reaction a 2-halobenzoate + NADH + O2 + H(+) = a halide anion + catechol + CO2 + NAD(+). It participates in xenobiotic degradation; benzoate degradation via CoA ligation. Functionally, component of 2-halobenzoate dioxygenase multicomponent enzyme system which catalyzes the incorporation of both atoms of molecular oxygen into 2-halobenzoate to form catechol. The polypeptide is 2-halobenzoate 1,2-dioxygenase small subunit (cbdB) (Burkholderia cepacia (Pseudomonas cepacia)).